The primary structure comprises 1095 residues: DNA-directed RNA polymerase subunit beta'' (1095 aa).

Residues Cys220, Cys293, Cys300, and Cys303 each coordinate Zn(2+).

This sequence belongs to the RNA polymerase beta' chain family. RpoC2 subfamily. In plastids the minimal PEP RNA polymerase catalytic core is composed of four subunits: alpha, beta, beta', and beta''. When a (nuclear-encoded) sigma factor is associated with the core the holoenzyme is formed, which can initiate transcription. Zn(2+) serves as cofactor.

It is found in the plastid. The protein localises to the chloroplast. It carries out the reaction RNA(n) + a ribonucleoside 5'-triphosphate = RNA(n+1) + diphosphate. DNA-dependent RNA polymerase catalyzes the transcription of DNA into RNA using the four ribonucleoside triphosphates as substrates. The sequence is that of DNA-directed RNA polymerase subunit beta'' from Zygnema circumcarinatum (Green alga).